The chain runs to 339 residues: Vomeronasal type-1 receptor A14 (339 aa).

Over 1 to 42 (MMGVQICQGMMSEIPFFSPPPQFSYMMNKNIRLHTDSNIRNT) the chain is Extracellular. A helical membrane pass occupies residues 43–63 (FFTDIGIGISANSLLLLFNIF). The Cytoplasmic portion of the chain corresponds to 64–75 (KLTRGQRSRLTD). A helical membrane pass occupies residues 76–96 (LPIGLLSLINLLMLLMAAFIA). Over 97-119 (TDTFISWKGWDDIICKFLVYLYR) the chain is Extracellular. An intrachain disulfide couples Cys-111 to Cys-198. A helical membrane pass occupies residues 120 to 140 (TFRGLSLCTSCLLSVLQAIIL). Residues 141 to 160 (SPRSSCLAKFKHKPPHHISC) are Cytoplasmic-facing. Residues 161 to 181 (AILSLSVLYMFIGSHLLVSII) form a helical membrane-spanning segment. At 182–213 (ATPNLTTNDFIHVTQSCSILPMSYLMQCMFST) the chain is on the extracellular side. A glycan (N-linked (GlcNAc...) asparagine) is linked at Asn-185. Residues 214 to 234 (LLAIRDVFLISLMVLSTWYMV) traverse the membrane as a helical segment. Topologically, residues 235–264 (ALLCRHRKQTRHLQGTSLSPKASPEQRATR) are cytoplasmic. Residues 265–285 (SILMLMSLFVLMSVFDSIVCS) form a helical membrane-spanning segment. Topologically, residues 286–296 (SRTMYLNDPIS) are extracellular. A helical membrane pass occupies residues 297 to 317 (YSIQLFMVHIYATVSPFVFIV). Topologically, residues 318 to 339 (TEKHIVNFLRSVCEGDECLNIH) are cytoplasmic.

This sequence belongs to the G-protein coupled receptor 1 family.

Its subcellular location is the cell membrane. Putative pheromone receptor implicated in the regulation of social as well as reproductive behavior. The sequence is that of Vomeronasal type-1 receptor A14 from Rattus norvegicus (Rat).